The primary structure comprises 164 residues: ATP synthase subunit b 2 (164 aa).

The helical transmembrane segment at Thr4–Pro24 threads the bilayer.

Belongs to the ATPase B chain family. F-type ATPases have 2 components, F(1) - the catalytic core - and F(0) - the membrane proton channel. F(1) has five subunits: alpha(3), beta(3), gamma(1), delta(1), epsilon(1). F(0) has three main subunits: a(1), b(2) and c(10-14). The alpha and beta chains form an alternating ring which encloses part of the gamma chain. F(1) is attached to F(0) by a central stalk formed by the gamma and epsilon chains, while a peripheral stalk is formed by the delta and b chains.

It is found in the cell inner membrane. F(1)F(0) ATP synthase produces ATP from ADP in the presence of a proton or sodium gradient. F-type ATPases consist of two structural domains, F(1) containing the extramembraneous catalytic core and F(0) containing the membrane proton channel, linked together by a central stalk and a peripheral stalk. During catalysis, ATP synthesis in the catalytic domain of F(1) is coupled via a rotary mechanism of the central stalk subunits to proton translocation. In terms of biological role, component of the F(0) channel, it forms part of the peripheral stalk, linking F(1) to F(0). The chain is ATP synthase subunit b 2 from Bartonella quintana (strain Toulouse) (Rochalimaea quintana).